The primary structure comprises 319 residues: tRNA dimethylallyltransferase (319 aa).

26-33 (GPTAAGKS) contributes to the ATP binding site. 28–33 (TAAGKS) is a binding site for substrate. The segment at 51 to 54 (DSMQ) is interaction with substrate tRNA.

It belongs to the IPP transferase family. Monomer. Requires Mg(2+) as cofactor.

It catalyses the reaction adenosine(37) in tRNA + dimethylallyl diphosphate = N(6)-dimethylallyladenosine(37) in tRNA + diphosphate. In terms of biological role, catalyzes the transfer of a dimethylallyl group onto the adenine at position 37 in tRNAs that read codons beginning with uridine, leading to the formation of N6-(dimethylallyl)adenosine (i(6)A). This is tRNA dimethylallyltransferase from Salinispora tropica (strain ATCC BAA-916 / DSM 44818 / JCM 13857 / NBRC 105044 / CNB-440).